The following is a 492-amino-acid chain: MO25-like protein 3 (492 aa).

A disordered region spans residues serine 442 to arginine 492. A compositionally biased stretch (pro residues) spans proline 465 to serine 474.

It belongs to the Mo25 family.

The chain is MO25-like protein 3 from Caenorhabditis briggsae.